The primary structure comprises 422 residues: Chorismate synthase (422 aa).

Positions 43 and 49 each coordinate NADP(+). Residues 143–145 (RSS), 264–265 (QA), Gly-309, 324–328 (KPIST), and Arg-350 contribute to the FMN site.

It belongs to the chorismate synthase family. As to quaternary structure, homotetramer. Requires FMNH2 as cofactor.

It carries out the reaction 5-O-(1-carboxyvinyl)-3-phosphoshikimate = chorismate + phosphate. It functions in the pathway metabolic intermediate biosynthesis; chorismate biosynthesis; chorismate from D-erythrose 4-phosphate and phosphoenolpyruvate: step 7/7. Catalyzes the anti-1,4-elimination of the C-3 phosphate and the C-6 proR hydrogen from 5-enolpyruvylshikimate-3-phosphate (EPSP) to yield chorismate, which is the branch point compound that serves as the starting substrate for the three terminal pathways of aromatic amino acid biosynthesis. This reaction introduces a second double bond into the aromatic ring system. This is Chorismate synthase from Corynebacterium jeikeium (strain K411).